A 298-amino-acid polypeptide reads, in one-letter code: MNHIQEAFLNTLKVERNFSEHTLKSYQDDLIQFNQFLEQEHLQLKTFEYRDARNYLSYLYSNHLKRTSVSRKISTLRTFYEYWMTLDENIINPFVQLVHPKKEKYLPQFFYEEEMEALFKTVEEDTSKNLRDRVILELLYATGIRVSELVNIKKQDIDFYANGVTVLGKGSKERFVPFGAYCRQSIENYLEHFKPIQSCNHDFLILNMKGEAITERGVRYVLNDIVKRTAGVSEIHPHKLRHTFATHLLNQGADLRTVQSLLGHVNLSTTGKYTHVSNQQLRKVYLNAHPRAKKENEI.

The Core-binding (CB) domain occupies 1–84 (MNHIQEAFLN…TLRTFYEYWM (84 aa)). The 182-residue stretch at 105–286 (YLPQFFYEEE…SNQQLRKVYL (182 aa)) folds into the Tyr recombinase domain. Residues Arg-145, Lys-169, His-238, Arg-241, and His-264 contribute to the active site. The O-(3'-phospho-DNA)-tyrosine intermediate role is filled by Tyr-273.

This sequence belongs to the 'phage' integrase family. XerC subfamily. Forms a cyclic heterotetrameric complex composed of two molecules of XerC and two molecules of XerD.

The protein resides in the cytoplasm. Functionally, site-specific tyrosine recombinase, which acts by catalyzing the cutting and rejoining of the recombining DNA molecules. The XerC-XerD complex is essential to convert dimers of the bacterial chromosome into monomers to permit their segregation at cell division. It also contributes to the segregational stability of plasmids. This chain is Tyrosine recombinase XerC, found in Staphylococcus aureus (strain JH1).